We begin with the raw amino-acid sequence, 547 residues long: Fimbria adhesin EcpD (547 aa).

Residues 1 to 20 (MRVNLLIAMIIFALIWPATA) form the signal peptide.

It belongs to the EcpD/MatE family. As to quaternary structure, forms polymers. Interacts with EcpA.

Its subcellular location is the fimbrium. In terms of biological role, part of the ecpRABCDE operon, which encodes the E.coli common pilus (ECP). ECP is found in both commensal and pathogenic strains and plays a dual role in early-stage biofilm development and host cell recognition. Tip pilus adhesin, which is required for assembly of EcpA into fibers. This Escherichia coli O18:K1:H7 (strain IHE3034 / ExPEC) protein is Fimbria adhesin EcpD (ecpD).